The following is a 2512-amino-acid chain: Isonitrile lipopeptide synthase (2512 aa).

Carrier domains follow at residues 935 to 1003 and 1984 to 2059; these read AAGL…PTPD and APAG…GRDA. Residues serine 963 and serine 2019 each carry the O-(pantetheine 4'-phosphoryl)serine modification. The region spanning 2112 to 2372 is the Thioester reductase (TE) domain; it reads LTGATGFLGR…LPVTFVAEAI (261 aa).

Belongs to the ATP-dependent AMP-binding enzyme family. Pantetheine 4'-phosphate serves as cofactor.

It carries out the reaction 2 a (3R)-3-isocyanyl-fatty acyl-[ACP] + L-lysine + ATP + 2 NADPH = an isonitrile lipopeptide + 2 holo-[ACP] + AMP + diphosphate + 2 NADP(+). Functionally, nonribosomal peptide synthetase (NRPS) involved in the biosynthesis of a unique class of isonitrile lipopeptides (INLPs) that seem to function as virulence factors in M.tuberculosis and to play a role in metal acquisition. Catalyzes the final step in the pathway, i.e. the condensation of a (3R)-3-isocyanyl-fatty acyl-[ACP] to both amino groups of a lysine, producing isonitrile lipopeptides. This is Isonitrile lipopeptide synthase from Mycobacterium tuberculosis (strain ATCC 25618 / H37Rv).